A 433-amino-acid polypeptide reads, in one-letter code: MARNLVCGRWQLLRLLRPQRSYHSVAVSLRPLAAELLAARRGNGRPPCALLAVFTPRCISTSATLFAEAQVQAPPVIPATSIPAAVPEVASGGAADVVQCATEPSFTELGLGSYTPVGLIQNLLEYIHVDLGLPWWGAIATCTVLARCLVFPLIVKGQREAAKIHNHMPEMQKFSARIREAKLAGDQAEFYKATIEMTRYQKKHDIKLLRPLILPLTQAPVFISFFIALREMANLPVPSLQTGGLWWFQDLTVSDPIYVLPLVVTATMWCVLELGAETGVQSNDLQFMRNIIRVMPLVVLPVTIHFPSAVFMYWLSSNVFSLCQVACLRIPAVRTVLKIPQRVVHDPDKLPPREGFLKSFKKGWKNAEIAQQLREREQRMQKHLDLAARGPLRQTFTHNPLLQHDPSHPPKAPNSNNSSIKANAKKPWQDTLG.

Residues 1 to 108 (MARNLVCGRW…QCATEPSFTE (108 aa)) are Mitochondrial intermembrane-facing. The chain crosses the membrane as a helical span at residues 109–129 (LGLGSYTPVGLIQNLLEYIHV). The Mitochondrial matrix portion of the chain corresponds to 130-134 (DLGLP). A helical transmembrane segment spans residues 135-155 (WWGAIATCTVLARCLVFPLIV). Over 156–207 (KGQREAAKIHNHMPEMQKFSARIREAKLAGDQAEFYKATIEMTRYQKKHDIK) the chain is Mitochondrial intermembrane. A helical transmembrane segment spans residues 208–228 (LLRPLILPLTQAPVFISFFIA). The Mitochondrial matrix segment spans residues 229-255 (LREMANLPVPSLQTGGLWWFQDLTVSD). A helical membrane pass occupies residues 256 to 276 (PIYVLPLVVTATMWCVLELGA). Topologically, residues 277 to 293 (ETGVQSNDLQFMRNIIR) are mitochondrial intermembrane. Residues 294–314 (VMPLVVLPVTIHFPSAVFMYW) traverse the membrane as a helical segment. At 315-433 (LSSNVFSLCQ…AKKPWQDTLG (119 aa)) the chain is on the mitochondrial matrix side. The residue at position 359 (S359) is a Phosphoserine. 2 positions are modified to phosphothreonine: T395 and T397. The tract at residues 397 to 433 (THNPLLQHDPSHPPKAPNSNNSSIKANAKKPWQDTLG) is disordered. Residues 413–426 (PNSNNSSIKANAKK) show a composition bias toward low complexity.

This sequence belongs to the OXA1/ALB3/YidC family. As to quaternary structure, monomer; predominantly monomeric at low salt concentrations. Homooligomer; predominantly homooligomeric at high salt concentrations. Associates with the mitochondrial ribosome. Associates preferentially as a dimer with the large ribosomal subunit 39S of the mitochondrial ribosome. Interacts with OXA1L; promoting cotranslational quality control in mitochondria.

Its subcellular location is the mitochondrion inner membrane. Its function is as follows. Mitochondrial membrane insertase that mediates the cotranslational insertion of integral membrane proteins into the mitochondrial inner membrane. Essential for the activity and assembly of cytochrome oxidase. Required for the correct biogenesis of ATP synthase and complex I in mitochondria. This Mus musculus (Mouse) protein is Mitochondrial inner membrane protein OXA1L (Oxa1l).